Consider the following 104-residue polypeptide: Pyrimidine/purine nucleoside phosphorylase (104 aa).

The protein belongs to the nucleoside phosphorylase PpnP family.

It carries out the reaction a purine D-ribonucleoside + phosphate = a purine nucleobase + alpha-D-ribose 1-phosphate. The enzyme catalyses adenosine + phosphate = alpha-D-ribose 1-phosphate + adenine. The catalysed reaction is cytidine + phosphate = cytosine + alpha-D-ribose 1-phosphate. It catalyses the reaction guanosine + phosphate = alpha-D-ribose 1-phosphate + guanine. It carries out the reaction inosine + phosphate = alpha-D-ribose 1-phosphate + hypoxanthine. The enzyme catalyses thymidine + phosphate = 2-deoxy-alpha-D-ribose 1-phosphate + thymine. The catalysed reaction is uridine + phosphate = alpha-D-ribose 1-phosphate + uracil. It catalyses the reaction xanthosine + phosphate = alpha-D-ribose 1-phosphate + xanthine. Catalyzes the phosphorolysis of diverse nucleosides, yielding D-ribose 1-phosphate and the respective free bases. Can use uridine, adenosine, guanosine, cytidine, thymidine, inosine and xanthosine as substrates. Also catalyzes the reverse reactions. This is Pyrimidine/purine nucleoside phosphorylase from Colwellia psychrerythraea (strain 34H / ATCC BAA-681) (Vibrio psychroerythus).